The sequence spans 85 residues: ATP synthase subunit c (85 aa).

2 consecutive transmembrane segments (helical) span residues 22-39 (AIGA…IGKI) and 65-85 (AALI…VFFL).

This sequence belongs to the ATPase C chain family. F-type ATPases have 2 components, F(1) - the catalytic core - and F(0) - the membrane proton channel. F(1) has five subunits: alpha(3), beta(3), gamma(1), delta(1), epsilon(1). F(0) has three main subunits: a(1), b(2) and c(10-14). The alpha and beta chains form an alternating ring which encloses part of the gamma chain. F(1) is attached to F(0) by a central stalk formed by the gamma and epsilon chains, while a peripheral stalk is formed by the delta and b chains.

Its subcellular location is the cell inner membrane. Its function is as follows. F(1)F(0) ATP synthase produces ATP from ADP in the presence of a proton or sodium gradient. F-type ATPases consist of two structural domains, F(1) containing the extramembraneous catalytic core and F(0) containing the membrane proton channel, linked together by a central stalk and a peripheral stalk. During catalysis, ATP synthesis in the catalytic domain of F(1) is coupled via a rotary mechanism of the central stalk subunits to proton translocation. Key component of the F(0) channel; it plays a direct role in translocation across the membrane. A homomeric c-ring of between 10-14 subunits forms the central stalk rotor element with the F(1) delta and epsilon subunits. This is ATP synthase subunit c from Bacteroides thetaiotaomicron (strain ATCC 29148 / DSM 2079 / JCM 5827 / CCUG 10774 / NCTC 10582 / VPI-5482 / E50).